Consider the following 431-residue polypeptide: tRNA-specific 2-thiouridylase MnmA (431 aa).

ATP-binding positions include 35–42 (AMSGGVDS) and Leu61. Cys129 functions as the Nucleophile in the catalytic mechanism. Cys129 and Cys226 are disulfide-bonded. Gly153 serves as a coordination point for ATP. The interval 176 to 178 (RDQ) is interaction with tRNA. Cys226 (cysteine persulfide intermediate) is an active-site residue. Positions 407–431 (PKPPNEDLLDTNESSDLVSPKRSAC) are disordered.

The protein belongs to the MnmA/TRMU family.

The protein localises to the cytoplasm. The enzyme catalyses S-sulfanyl-L-cysteinyl-[protein] + uridine(34) in tRNA + AH2 + ATP = 2-thiouridine(34) in tRNA + L-cysteinyl-[protein] + A + AMP + diphosphate + H(+). Its function is as follows. Catalyzes the 2-thiolation of uridine at the wobble position (U34) of tRNA, leading to the formation of s(2)U34. This is tRNA-specific 2-thiouridylase MnmA from Beijerinckia indica subsp. indica (strain ATCC 9039 / DSM 1715 / NCIMB 8712).